The chain runs to 165 residues: Pyruvoyl-dependent arginine decarboxylase (165 aa).

Position 53 is a pyruvic acid (Ser) (Ser-53).

The protein belongs to the PdaD family. Pyruvate is required as a cofactor.

It catalyses the reaction L-arginine + H(+) = agmatine + CO2. The polypeptide is Pyruvoyl-dependent arginine decarboxylase (Methanococcus aeolicus (strain ATCC BAA-1280 / DSM 17508 / OCM 812 / Nankai-3)).